The chain runs to 466 residues: Asparagine--tRNA ligase (466 aa).

The protein belongs to the class-II aminoacyl-tRNA synthetase family. Homodimer.

The protein resides in the cytoplasm. The enzyme catalyses tRNA(Asn) + L-asparagine + ATP = L-asparaginyl-tRNA(Asn) + AMP + diphosphate + H(+). The polypeptide is Asparagine--tRNA ligase (Enterobacter sp. (strain 638)).